The following is a 449-amino-acid chain: Probable D-serine dehydratase (449 aa).

Lys119 bears the N6-(pyridoxal phosphate)lysine mark.

It belongs to the serine/threonine dehydratase family. DsdA subfamily. It depends on pyridoxal 5'-phosphate as a cofactor.

The enzyme catalyses D-serine = pyruvate + NH4(+). The polypeptide is Probable D-serine dehydratase (Pseudomonas putida (strain ATCC 700007 / DSM 6899 / JCM 31910 / BCRC 17059 / LMG 24140 / F1)).